The sequence spans 238 residues: Probable transcriptional regulatory protein SMU_1789c (238 aa).

The protein belongs to the TACO1 family. YeeN subfamily.

It is found in the cytoplasm. The polypeptide is Probable transcriptional regulatory protein SMU_1789c (Streptococcus mutans serotype c (strain ATCC 700610 / UA159)).